The chain runs to 131 residues: DNA-directed RNA polymerase subunit Rpo8 (131 aa).

It belongs to the archaeal Rpo8 RNA polymerase subunit family. As to quaternary structure, part of the 13-subunit RNA polymerase complex. Interacts with Rpo1N on the periphery of the clamp head.

It is found in the cytoplasm. The catalysed reaction is RNA(n) + a ribonucleoside 5'-triphosphate = RNA(n+1) + diphosphate. In terms of biological role, DNA-dependent RNA polymerase (RNAP) catalyzes the transcription of DNA into RNA using the four ribonucleoside triphosphates as substrates. This chain is DNA-directed RNA polymerase subunit Rpo8, found in Saccharolobus shibatae (strain ATCC 51178 / DSM 5389 / JCM 8931 / NBRC 15437 / B12) (Sulfolobus shibatae).